Consider the following 146-residue polypeptide: Large ribosomal subunit protein uL15 (146 aa).

Over residues 1 to 18 (MKLHELKAAEGTRKERNR) the composition is skewed to basic and acidic residues. The interval 1 to 58 (MKLHELKAAEGTRKERNRVGRGMSSGNGKTSGRGHKGQKARSGGGVRPGFEGGQMPLF) is disordered. Gly residues predominate over residues 42-52 (SGGGVRPGFEG).

The protein belongs to the universal ribosomal protein uL15 family. As to quaternary structure, part of the 50S ribosomal subunit.

Binds to the 23S rRNA. This Oceanobacillus iheyensis (strain DSM 14371 / CIP 107618 / JCM 11309 / KCTC 3954 / HTE831) protein is Large ribosomal subunit protein uL15.